A 90-amino-acid polypeptide reads, in one-letter code: UPF0298 protein RBAM_014860 (90 aa).

It belongs to the UPF0298 family.

The protein resides in the cytoplasm. The chain is UPF0298 protein RBAM_014860 from Bacillus velezensis (strain DSM 23117 / BGSC 10A6 / LMG 26770 / FZB42) (Bacillus amyloliquefaciens subsp. plantarum).